The primary structure comprises 276 residues: NADPH-dependent 7-cyano-7-deazaguanine reductase (276 aa).

Ile-83–Ser-85 is a binding site for substrate. Ser-85 to Lys-86 contributes to the NADPH binding site. Cys-184 functions as the Thioimide intermediate in the catalytic mechanism. The active-site Proton donor is the Asp-191. Residue His-223–Glu-224 coordinates substrate. Arg-252–Gly-253 contacts NADPH.

This sequence belongs to the GTP cyclohydrolase I family. QueF type 2 subfamily. Homodimer.

The protein resides in the cytoplasm. The catalysed reaction is 7-aminomethyl-7-carbaguanine + 2 NADP(+) = 7-cyano-7-deazaguanine + 2 NADPH + 3 H(+). The protein operates within tRNA modification; tRNA-queuosine biosynthesis. Its function is as follows. Catalyzes the NADPH-dependent reduction of 7-cyano-7-deazaguanine (preQ0) to 7-aminomethyl-7-deazaguanine (preQ1). The sequence is that of NADPH-dependent 7-cyano-7-deazaguanine reductase from Pseudomonas savastanoi pv. phaseolicola (strain 1448A / Race 6) (Pseudomonas syringae pv. phaseolicola (strain 1448A / Race 6)).